Consider the following 67-residue polypeptide: Large ribosomal subunit protein eL24 (67 aa).

Zn(2+) contacts are provided by cysteine 7, cysteine 10, cysteine 33, and cysteine 37. A C4-type zinc finger spans residues 7-37; sequence CSYCGKPFEPGTGKMFVRNDGRVLFFCSRKC.

This sequence belongs to the eukaryotic ribosomal protein eL24 family. Part of the 50S ribosomal subunit. Forms a cluster with proteins L3 and L14. Zn(2+) is required as a cofactor.

In terms of biological role, binds to the 23S rRNA. This Pyrococcus abyssi (strain GE5 / Orsay) protein is Large ribosomal subunit protein eL24.